The primary structure comprises 703 residues: Pentatricopeptide repeat-containing protein At1g22830 (703 aa).

PPR repeat units follow at residues Val-82–Phe-116, Asp-117–Leu-147, His-148–Ala-182, Asp-183–Cys-217, Asn-218–Arg-248, Asp-249–Ala-283, Ser-284–Ile-318, Gly-319–Ser-353, Ile-356–Asn-386, Ser-387–Pro-421, Asn-422–Arg-452, Cys-458–Arg-488, Asp-489–Pro-523, Asp-524–Val-554, and Arg-560–Ala-594. Residues Met-595–Asp-671 are type E motif. The interval Asp-671–Gly-703 is disordered.

It belongs to the PPR family. PCMP-E subfamily.

The protein is Pentatricopeptide repeat-containing protein At1g22830 (PCMP-E24) of Arabidopsis thaliana (Mouse-ear cress).